The primary structure comprises 262 residues: Proenkephalin-A-A (262 aa).

The first 24 residues, Met-1–Ala-24, serve as a signal peptide directing secretion. Intrachain disulfides connect Cys-26–Cys-48, Cys-30–Cys-52, and Cys-33–Cys-65. 5 consecutive propeptides follow at residues Met-110–Asn-131, Glu-139–Asn-177, Ser-190–Gln-201, Val-211–Gln-221, and Thr-229–Glu-253.

The protein belongs to the opioid neuropeptide precursor family. In terms of processing, the N-terminal domain contains 6 conserved cysteines thought to be involved in disulfide bonding and/or processing.

Its subcellular location is the secreted. Its function is as follows. Enkephalin neuropeptides compete with and mimic the effects of opiate drugs. They play a role in a number of physiologic functions, including pain perception and responses to stress. The polypeptide is Proenkephalin-A-A (penk-a) (Xenopus laevis (African clawed frog)).